A 170-amino-acid polypeptide reads, in one-letter code: 3-hydroxydecanoyl-[acyl-carrier-protein] dehydratase (170 aa).

His-69 is an active-site residue.

Belongs to the thioester dehydratase family. FabA subfamily. As to quaternary structure, homodimer.

It is found in the cytoplasm. The enzyme catalyses a (3R)-hydroxyacyl-[ACP] = a (2E)-enoyl-[ACP] + H2O. It carries out the reaction (3R)-hydroxydecanoyl-[ACP] = (2E)-decenoyl-[ACP] + H2O. It catalyses the reaction (2E)-decenoyl-[ACP] = (3Z)-decenoyl-[ACP]. The protein operates within lipid metabolism; fatty acid biosynthesis. Functionally, necessary for the introduction of cis unsaturation into fatty acids. Catalyzes the dehydration of (3R)-3-hydroxydecanoyl-ACP to E-(2)-decenoyl-ACP and then its isomerization to Z-(3)-decenoyl-ACP. Can catalyze the dehydratase reaction for beta-hydroxyacyl-ACPs with saturated chain lengths up to 16:0, being most active on intermediate chain length. The sequence is that of 3-hydroxydecanoyl-[acyl-carrier-protein] dehydratase from Caulobacter vibrioides (strain ATCC 19089 / CIP 103742 / CB 15) (Caulobacter crescentus).